The following is a 546-amino-acid chain: MAAKDVVFGDSARSKMVEGVNILANAVKVTLGPKGRNVVLERSFGGPTVTKDGVSVAKEIELKDKLQNMGAQMVKEVASKTSDNAGDGTTTATVLAQSIVREGMKYVASGMNPMDLKRGIDKAVAAAVEELKKISKPCTTNKEIAQVGSISANSDTSIGDRIAEAMDKVGKEGVITVEDGKSLADELDVVEGMQFDRGYLSPYFINNPEKQVAVLDNPFVLLHDKKVSNIRDLLPVLEQVAKAGRPLLIIAEDIEGEALATLVVNNIRGILKTVAVKAPGFGDRRKAMLEDIAILTGGQVIAEETGLTLEKATLAELGQAKRIEVGKENTTIIDGAGEAASIEARVKQVRAQIEEATSDYDREKLQERVAKLAGGVAVIKVGAATEVEMKEKKARVEDALHATRAAVEEGIVAGGGVALIRARTAIASLTGANADQNAGIKIVLRAMEEPLRQIVTNGGEEASVVVAAVAAGQGNYGYNAATGEYVDMVEAGVVDPTKVTRTALQNAASVAGLLLTTDAAVAELPKEDAPMPGGMPGGMGGMGMDM.

ATP-binding positions include 30-33 (TLGP), K51, 87-91 (DGTTT), G415, 479-481 (NAA), and D495. Residues 526–546 (KEDAPMPGGMPGGMGGMGMDM) are disordered. The span at 534 to 546 (GMPGGMGGMGMDM) shows a compositional bias: gly residues.

The protein belongs to the chaperonin (HSP60) family. In terms of assembly, forms a cylinder of 14 subunits composed of two heptameric rings stacked back-to-back. Interacts with the co-chaperonin GroES.

Its subcellular location is the cytoplasm. It carries out the reaction ATP + H2O + a folded polypeptide = ADP + phosphate + an unfolded polypeptide.. Functionally, together with its co-chaperonin GroES, plays an essential role in assisting protein folding. The GroEL-GroES system forms a nano-cage that allows encapsulation of the non-native substrate proteins and provides a physical environment optimized to promote and accelerate protein folding. The protein is Chaperonin GroEL 1 of Burkholderia ambifaria (strain ATCC BAA-244 / DSM 16087 / CCUG 44356 / LMG 19182 / AMMD) (Burkholderia cepacia (strain AMMD)).